A 215-amino-acid polypeptide reads, in one-letter code: Orotate phosphoribosyltransferase (215 aa).

Position 26 (Lys-26) interacts with 5-phospho-alpha-D-ribose 1-diphosphate. 34–35 provides a ligand contact to orotate; sequence FF. 5-phospho-alpha-D-ribose 1-diphosphate-binding positions include 72 to 73, Arg-99, Lys-100, Lys-103, His-105, and 124 to 132; these read YK and DDVITAGTA. Residues Thr-128 and Arg-156 each coordinate orotate.

Belongs to the purine/pyrimidine phosphoribosyltransferase family. PyrE subfamily. In terms of assembly, homodimer. Mg(2+) is required as a cofactor.

The enzyme catalyses orotidine 5'-phosphate + diphosphate = orotate + 5-phospho-alpha-D-ribose 1-diphosphate. Its pathway is pyrimidine metabolism; UMP biosynthesis via de novo pathway; UMP from orotate: step 1/2. Catalyzes the transfer of a ribosyl phosphate group from 5-phosphoribose 1-diphosphate to orotate, leading to the formation of orotidine monophosphate (OMP). This Stutzerimonas stutzeri (strain A1501) (Pseudomonas stutzeri) protein is Orotate phosphoribosyltransferase.